The following is an 88-amino-acid chain: Cold-regulated protein BLT14 (88 aa).

In Hordeum vulgare (Barley), this protein is Cold-regulated protein BLT14 (BLT14).